The primary structure comprises 162 residues: MGLETEKADVQLFMDDDSYSHHSGLEYADPEKFVDSGQDRDPHRLNSHLKLGFEDVIAEPVTTHSFDKVWICSHALFEISKYVMYKFLTVFLSIPLAFLAGILFATLSCLHIWIIMPFVKTCLMVLPSVQTIWKSVTDAIIAPLCTSIGRSFSSVSLQLSHD.

Over 1 to 86 (MGLETEKADV…FEISKYVMYK (86 aa)) the chain is Cytoplasmic. Residue tyrosine 19 is modified to Phosphotyrosine; by SRC. 2 positions are modified to phosphoserine: serine 20 and serine 23. The residue at position 27 (tyrosine 27) is a Phosphotyrosine; by SRC. Serine 36 carries the post-translational modification Phosphoserine. Residues 87–107 (FLTVFLSIPLAFLAGILFATL) constitute an intramembrane region (helical). Residues 108-162 (SCLHIWIIMPFVKTCLMVLPSVQTIWKSVTDAIIAPLCTSIGRSFSSVSLQLSHD) lie on the Cytoplasmic side of the membrane.

This sequence belongs to the caveolin family. As to quaternary structure, monomer or homodimer. Interacts with CAV1; the interaction forms a stable heterooligomeric complex that is required for targeting to lipid rafts and for caveolae formation. Tyrosine phosphorylated forms do not form heterooligomers with the Tyr-19-phosphorylated form existing as a monomer or dimer, and the Tyr-27-form as a monomer only. Interacts (tyrosine phosphorylated form) with the SH2 domain-containing proteins, RASA1, NCK1 and SRC. Interacts (tyrosine phosphorylated form) with INSR, the interaction (Tyr-27-phosphorylated form) is increased on insulin stimulation. Interacts (Tyr-19 phosphorylated form) with MAPK1 (phosphorylated form); the interaction, promoted by insulin, leads to nuclear location and MAPK1 activation. Interacts with STAT3; the interaction is increased on insulin-induced tyrosine phosphorylation leading to STAT activation. In terms of processing, phosphorylated on serine and tyrosine residues. CAV1 promotes phosphorylation on Ser-23 which then targets the complex to the plasma membrane, lipid rafts and caveolae. Phosphorylation on Ser-36 appears to modulate mitosis in endothelial cells. Phosphorylation on both Tyr-19 and Tyr-27 is required for insulin-induced 'Ser-727' phosphorylation of STAT3 and its activation. Phosphorylation on Tyr-19 is required for insulin-induced phosphorylation of MAPK1 and DNA binding of STAT3. Tyrosine phosphorylation is induced by both EGF and insulin (By. similarity).

The protein resides in the nucleus. The protein localises to the cytoplasm. It localises to the golgi apparatus membrane. Its subcellular location is the cell membrane. It is found in the membrane. The protein resides in the caveola. In terms of biological role, may act as a scaffolding protein within caveolar membranes. Interacts directly with G-protein alpha subunits and can functionally regulate their activity. Acts as an accessory protein in conjunction with CAV1 in targeting to lipid rafts and driving caveolae formation. The Ser-36 phosphorylated form has a role in modulating mitosis in endothelial cells. Positive regulator of cellular mitogenesis of the MAPK signaling pathway. Required for the insulin-stimulated nuclear translocation and activation of MAPK1 and STAT3, and the subsequent regulation of cell cycle progression. The sequence is that of Caveolin-2 (CAV2) from Saimiri boliviensis boliviensis (Bolivian squirrel monkey).